A 180-amino-acid chain; its full sequence is Protein GrpE (180 aa).

Residues 1–21 are disordered; it reads MSEEVKEQNLPEVEPVQEAAS.

This sequence belongs to the GrpE family. In terms of assembly, homodimer.

It localises to the cytoplasm. Participates actively in the response to hyperosmotic and heat shock by preventing the aggregation of stress-denatured proteins, in association with DnaK and GrpE. It is the nucleotide exchange factor for DnaK and may function as a thermosensor. Unfolded proteins bind initially to DnaJ; upon interaction with the DnaJ-bound protein, DnaK hydrolyzes its bound ATP, resulting in the formation of a stable complex. GrpE releases ADP from DnaK; ATP binding to DnaK triggers the release of the substrate protein, thus completing the reaction cycle. Several rounds of ATP-dependent interactions between DnaJ, DnaK and GrpE are required for fully efficient folding. The sequence is that of Protein GrpE from Campylobacter concisus (strain 13826).